A 222-amino-acid polypeptide reads, in one-letter code: Charged multivesicular body protein 4a (222 aa).

Disordered regions lie at residues 1–21 (MSGLGRLFGKGKKEKGPTPEE) and 180–211 (VGDKEEEPSVKLPSVPSTHLPAGPAPKVDEDE). An interaction with phosphoinosides region spans residues 1–116 (MSGLGRLFGK…ELAAQSMKKA (116 aa)). The intramolecular interaction with C-terminus stretch occupies residues 1-150 (MSGLGRLFGK…QISDAISRPM (150 aa)). Coiled-coil stretches lie at residues 20-105 (EEAI…VLRT) and 155-180 (DVDEDELLEELEELEQEELAQELLNV). The segment at 151–222 (GFGDDVDEDE…ALKQLAEWVS (72 aa)) is intramolecular interaction with N-terminus. Serine 196 bears the Phosphoserine mark.

Belongs to the SNF7 family. In terms of assembly, probable core component of the endosomal sorting required for transport complex III (ESCRT-III). ESCRT-III components are thought to multimerize to form a flat lattice on the perimeter membrane of the endosome. Several assembly forms of ESCRT-III may exist that interact and act sequentially. Self-associates; overexpression leads to the assembly of filaments that curve and associate to create circular rings. Interacts with CHMP2A. Interacts with CHMP3; the interaction requires the release of CHMP4A autoinhibition. Interacts with CHMP4B. Interacts with CHMP4C. Interacts with CHMP6. Interacts with VPS4A. Interacts with PDCD6IP; the interaction is direct. Widely expressed. Expressed at higher level in heart, kidney, liver and skeletal muscle. Also expressed in brain, placenta, lung and pancreas.

The protein localises to the cytoplasmic vesicle membrane. It is found in the late endosome membrane. Its function is as follows. Probable core component of the endosomal sorting required for transport complex III (ESCRT-III) which is involved in multivesicular bodies (MVBs) formation and sorting of endosomal cargo proteins into MVBs. MVBs contain intraluminal vesicles (ILVs) that are generated by invagination and scission from the limiting membrane of the endosome and mostly are delivered to lysosomes enabling degradation of membrane proteins, such as stimulated growth factor receptors, lysosomal enzymes and lipids. The MVB pathway appears to require the sequential function of ESCRT-O, -I,-II and -III complexes. ESCRT-III proteins mostly dissociate from the invaginating membrane before the ILV is released. The ESCRT machinery also functions in topologically equivalent membrane fission events, such as the terminal stages of cytokinesis and the budding of enveloped viruses (HIV-1 and other lentiviruses). ESCRT-III proteins are believed to mediate the necessary vesicle extrusion and/or membrane fission activities, possibly in conjunction with the AAA ATPase VPS4. When overexpressed, membrane-assembled circular arrays of CHMP4A filaments can promote or stabilize negative curvature and outward budding. Via its interaction with PDCD6IP involved in HIV-1 p6- and p9-dependent virus release. CHMP4A/B/C are required for the exosomal release of SDCBP, CD63 and syndecan. The polypeptide is Charged multivesicular body protein 4a (CHMP4A) (Homo sapiens (Human)).